The sequence spans 318 residues: Aspartate carbamoyltransferase catalytic subunit (318 aa).

Carbamoyl phosphate contacts are provided by Arg59 and Thr60. Lys87 serves as a coordination point for L-aspartate. The carbamoyl phosphate site is built by Arg109, His137, and Gln140. L-aspartate-binding residues include Arg170 and Arg224. Residues Gly265 and Pro266 each contribute to the carbamoyl phosphate site.

It belongs to the aspartate/ornithine carbamoyltransferase superfamily. ATCase family. As to quaternary structure, heterododecamer (2C3:3R2) of six catalytic PyrB chains organized as two trimers (C3), and six regulatory PyrI chains organized as three dimers (R2).

The enzyme catalyses carbamoyl phosphate + L-aspartate = N-carbamoyl-L-aspartate + phosphate + H(+). It participates in pyrimidine metabolism; UMP biosynthesis via de novo pathway; (S)-dihydroorotate from bicarbonate: step 2/3. Functionally, catalyzes the condensation of carbamoyl phosphate and aspartate to form carbamoyl aspartate and inorganic phosphate, the committed step in the de novo pyrimidine nucleotide biosynthesis pathway. The protein is Aspartate carbamoyltransferase catalytic subunit of Rhizobium etli (strain ATCC 51251 / DSM 11541 / JCM 21823 / NBRC 15573 / CFN 42).